The chain runs to 113 residues: Cell cycle protein GpsB (113 aa).

A coiled-coil region spans residues 32-70 (LDSVIKDYENFGKEIERMKNENDRLTDKVDELNKQVSAG).

Belongs to the GpsB family. In terms of assembly, forms polymers through the coiled coil domains. Interacts with PBP1, MreC and EzrA.

Its subcellular location is the cytoplasm. In terms of biological role, divisome component that associates with the complex late in its assembly, after the Z-ring is formed, and is dependent on DivIC and PBP2B for its recruitment to the divisome. Together with EzrA, is a key component of the system that regulates PBP1 localization during cell cycle progression. Its main role could be the removal of PBP1 from the cell pole after pole maturation is completed. Also contributes to the recruitment of PBP1 to the division complex. Not essential for septum formation. In Pediococcus pentosaceus (strain ATCC 25745 / CCUG 21536 / LMG 10740 / 183-1w), this protein is Cell cycle protein GpsB.